A 46-amino-acid chain; its full sequence is Photosystem II reaction center protein Psb30 (46 aa).

Residue Met-1 is modified to N-formylmethionine. The Lumenal portion of the chain corresponds to 1-20 (MGIFNGIIEFLSNINFEVIA). The chain crosses the membrane as a helical span at residues 21–38 (QLTMIAMIGIAGPMIIFL). Residues 39-46 (LAVRRGNL) are Cytoplasmic-facing.

The protein belongs to the Psb30/Ycf12 family. As to quaternary structure, PSII is composed of 1 copy each of membrane proteins PsbA, PsbB, PsbC, PsbD, PsbE, PsbF, PsbH, PsbI, PsbJ, PsbK, PsbL, PsbM, PsbT, PsbX, PsbY, PsbZ, Psb30/Ycf12, peripheral proteins PsbO, CyanoQ (PsbQ), PsbU, PsbV and a large number of cofactors. It forms dimeric complexes. Part of a photosystem II (PSII) assembly intermediate complex PSII-I; crystallized from a strain deleted of psbJ, it forms monomeric PSII before addition of the oxygen evolving complex. PSII-I includes 3 assembly factors not found in mature PSII (Psb27, Psb28 and Psb34). PSII binds multiple chlorophylls, carotenoids and specific lipids. serves as cofactor.

Its subcellular location is the cellular thylakoid membrane. Functionally, a core subunit of photosystem II (PSII). PSII is a light-driven water plastoquinone oxidoreductase, using light energy to abstract electrons from H(2)O, generating a proton gradient subsequently used for ATP formation. Helps stabilize PSII. The protein is Photosystem II reaction center protein Psb30 of Thermosynechococcus vestitus (strain NIES-2133 / IAM M-273 / BP-1).